A 314-amino-acid chain; its full sequence is Methionyl-tRNA formyltransferase (314 aa).

112 to 115 (SLLP) contacts (6S)-5,6,7,8-tetrahydrofolate.

It belongs to the Fmt family.

The catalysed reaction is L-methionyl-tRNA(fMet) + (6R)-10-formyltetrahydrofolate = N-formyl-L-methionyl-tRNA(fMet) + (6S)-5,6,7,8-tetrahydrofolate + H(+). Attaches a formyl group to the free amino group of methionyl-tRNA(fMet). The formyl group appears to play a dual role in the initiator identity of N-formylmethionyl-tRNA by promoting its recognition by IF2 and preventing the misappropriation of this tRNA by the elongation apparatus. In Buchnera aphidicola subsp. Schizaphis graminum (strain Sg), this protein is Methionyl-tRNA formyltransferase.